Consider the following 72-residue polypeptide: Brevinin-2GHc (72 aa).

Positions 1-22 (MFTMKKSLLLLFFLGMISLSLC) are cleaved as a signal peptide. A propeptide spanning residues 23–42 (EQERGADEDEGEVEEQIKRS) is cleaved from the precursor. A disulfide bridge links cysteine 64 with cysteine 70.

Expressed by the skin glands.

It is found in the secreted. In terms of biological role, antimicrobial peptide. Active against the Gram-positive bacteria S.aureus FDA209P (MIC=9.8 ug/ml) and B.subtilis ATCC 6633 (MIC&gt;64 ug/ml), and the Gram-negative bacteria E.coli O111 (MIC=19.6 ug/ml) and E.coli ATCC 25922 (MIC=9.8 ug/ml). Not active against the fungus C.albicans. In Sylvirana guentheri (Gunther's frog), this protein is Brevinin-2GHc.